Reading from the N-terminus, the 533-residue chain is Beta-1,4 N-acetylgalactosaminyltransferase 1 (533 aa).

Residues 1-7 (MWLGRRA) lie on the Cytoplasmic side of the membrane. Residues 8-25 (LCALVLLLACASLGLLYA) form a helical; Signal-anchor for type II membrane protein membrane-spanning segment. The Lumenal segment spans residues 26–533 (STRDAPGLRL…KHRLQCMTSQ (508 aa)). N79, N179, and N274 each carry an N-linked (GlcNAc...) asparagine glycan. An intrachain disulfide couples C429 to C476.

It belongs to the glycosyltransferase 2 family. In terms of assembly, homodimer; disulfide-linked.

It is found in the golgi apparatus membrane. The catalysed reaction is a ganglioside GM3 (d18:1(4E)) + UDP-N-acetyl-alpha-D-galactosamine = a ganglioside GM2 (d18:1(4E)) + UDP + H(+). It catalyses the reaction a ganglioside GM3 + UDP-N-acetyl-alpha-D-galactosamine = a ganglioside GM2 + UDP + H(+). It carries out the reaction a ganglioside GD3 + UDP-N-acetyl-alpha-D-galactosamine = a ganglioside GD2 + UDP + H(+). The enzyme catalyses a ganglioside GD3 (d18:1(4E)) + UDP-N-acetyl-alpha-D-galactosamine = a ganglioside GD2 (d18:1(4E)) + UDP + H(+). The catalysed reaction is a beta-D-Gal-(1-&gt;4)-beta-D-Glc-(1&lt;-&gt;1)-Cer(d18:1(4E)) + UDP-N-acetyl-alpha-D-galactosamine = a ganglioside GA2 (d18:1(4E)) + UDP + H(+). It catalyses the reaction a ganglioside GD1a + UDP-N-acetyl-alpha-D-galactosamine = a ganglioside GalNAc-GD1a + UDP + H(+). It carries out the reaction a ganglioside GT3 (d18:1(4E)) + UDP-N-acetyl-alpha-D-galactosamine = a ganglioside GT2 (d18:1(4E)) + UDP + H(+). The enzyme catalyses a beta-D-galactosyl-(1-&gt;4)-beta-D-glucosyl-(1&lt;-&gt;1)-ceramide + UDP-N-acetyl-alpha-D-galactosamine = a ganglioside GA2 + UDP + H(+). The catalysed reaction is a neolactoside IV(3)-alpha-NeuGc-nLc4Cer + UDP-N-acetyl-alpha-D-galactosamine = a neolactoside IV(4)-beta-GalNAc-IV(3)-alpha-NeuGc-nLc4Cer + UDP + H(+). Its pathway is sphingolipid metabolism. Involved in the biosynthesis of gangliosides GM2, GD2, GT2 and GA2 from GM3, GD3, GT3 and GA3, respectively. In Homo sapiens (Human), this protein is Beta-1,4 N-acetylgalactosaminyltransferase 1.